The sequence spans 201 residues: ATP-dependent Clp protease proteolytic subunit (201 aa).

S101 acts as the Nucleophile in catalysis. The active site involves H126.

Belongs to the peptidase S14 family. In terms of assembly, component of the chloroplastic Clp protease core complex.

It is found in the plastid. The protein localises to the chloroplast stroma. The catalysed reaction is Hydrolysis of proteins to small peptides in the presence of ATP and magnesium. alpha-casein is the usual test substrate. In the absence of ATP, only oligopeptides shorter than five residues are hydrolyzed (such as succinyl-Leu-Tyr-|-NHMec, and Leu-Tyr-Leu-|-Tyr-Trp, in which cleavage of the -Tyr-|-Leu- and -Tyr-|-Trp bonds also occurs).. Functionally, cleaves peptides in various proteins in a process that requires ATP hydrolysis. Has a chymotrypsin-like activity. Plays a major role in the degradation of misfolded proteins. The sequence is that of ATP-dependent Clp protease proteolytic subunit from Chlorella vulgaris (Green alga).